The following is a 425-amino-acid chain: Enolase 2 (425 aa).

A (2R)-2-phosphoglycerate-binding site is contributed by glutamine 163. Glutamate 205 (proton donor) is an active-site residue. Aspartate 242, glutamate 285, and aspartate 312 together coordinate Mg(2+). Lysine 337, arginine 366, serine 367, and lysine 388 together coordinate (2R)-2-phosphoglycerate. Lysine 337 (proton acceptor) is an active-site residue.

Belongs to the enolase family. The cofactor is Mg(2+).

The protein localises to the cytoplasm. It localises to the secreted. Its subcellular location is the cell surface. The catalysed reaction is (2R)-2-phosphoglycerate = phosphoenolpyruvate + H2O. It functions in the pathway carbohydrate degradation; glycolysis; pyruvate from D-glyceraldehyde 3-phosphate: step 4/5. Functionally, catalyzes the reversible conversion of 2-phosphoglycerate (2-PG) into phosphoenolpyruvate (PEP). It is essential for the degradation of carbohydrates via glycolysis. This is Enolase 2 from Cupriavidus metallidurans (strain ATCC 43123 / DSM 2839 / NBRC 102507 / CH34) (Ralstonia metallidurans).